The primary structure comprises 100 residues: Urease subunit gamma (100 aa).

This sequence belongs to the urease gamma subunit family. In terms of assembly, heterotrimer of UreA (gamma), UreB (beta) and UreC (alpha) subunits. Three heterotrimers associate to form the active enzyme.

Its subcellular location is the cytoplasm. The enzyme catalyses urea + 2 H2O + H(+) = hydrogencarbonate + 2 NH4(+). The protein operates within nitrogen metabolism; urea degradation; CO(2) and NH(3) from urea (urease route): step 1/1. The protein is Urease subunit gamma of Saccharopolyspora erythraea (strain ATCC 11635 / DSM 40517 / JCM 4748 / NBRC 13426 / NCIMB 8594 / NRRL 2338).